A 181-amino-acid polypeptide reads, in one-letter code: MLAQDNIQINIEPVTTSSSGIPIYHYSPLATAASVGSVEIVEALLSKGADINFGSTPSFITAIKNGHLKICYLLKALGANTQINLPNGEKPLELYKDYLYKFYDELYEFKQTIQDRAGAYYGYDKNKPLNIKDLEIWYTKLVIWDFKAFSRKAHTMKEIEELSEYEQNLFPEITDSVNIIG.

2 ANK repeats span residues 24-53 and 54-83; these read YHYSPLATAASVGSVEIVEALLSKGADINF and GSTPSFITAIKNGHLKICYLLKALGANTQI.

The protein is Putative ankyrin repeat protein RF_0782 of Rickettsia felis (strain ATCC VR-1525 / URRWXCal2) (Rickettsia azadi).